A 225-amino-acid chain; its full sequence is Prepilin leader peptidase/N-methyltransferase (225 aa).

The Periplasmic portion of the chain corresponds to 1–2; the sequence is MT. Residues 3–23 traverse the membrane as a helical segment; it reads MLLPLFILVGFIADYFVNAIA. The Cytoplasmic portion of the chain corresponds to 24–67; sequence YHLSPLEDKTALTFRQVLVHFRQKKYAWHDTVPLILCVAAAIAC. A helical membrane pass occupies residues 68–88; the sequence is ALAPFTPIVTGALFLYFCFVL. Over 89 to 103 the chain is Periplasmic; it reads TLSVIDFRTQLLPDK. The chain crosses the membrane as a helical span at residues 104-124; the sequence is LTLPLLWLGLVFNAQYGLIDL. The Cytoplasmic segment spans residues 125 to 127; it reads HDA. A helical membrane pass occupies residues 128–148; sequence VYGAVAGYGVLWCVYWGVWLV. The Periplasmic segment spans residues 149–174; it reads CHKEGLGYGDFKLLAAAGAWCGWQTL. Residues 175-195 traverse the membrane as a helical segment; the sequence is PMILLIASLGGIGYAIVSQLL. Over 196–202 the chain is Cytoplasmic; that stretch reads QRRTITT. Residues 203–223 traverse the membrane as a helical segment; sequence IAFGPWLALGSMINLGYLAWI. The Periplasmic segment spans residues 224 to 225; sequence SY.

The protein belongs to the peptidase A24 family.

The protein localises to the cell inner membrane. It carries out the reaction Typically cleaves a -Gly-|-Phe- bond to release an N-terminal, basic peptide of 5-8 residues from type IV prepilin, and then N-methylates the new N-terminal amino group, the methyl donor being S-adenosyl-L-methionine.. Functionally, plays a role in type II pseudopili formation by proteolytically removing the leader sequence from substrate proteins and subsequently monomethylating the alpha-amino group of the newly exposed N-terminal phenylalanine. Substrates include proteins required for biogenesis of the type II general secretory apparatus. This chain is Prepilin leader peptidase/N-methyltransferase (gspO), found in Escherichia coli (strain K12).